The primary structure comprises 118 residues: NADPH-dependent 7-cyano-7-deazaguanine reductase (118 aa).

The active-site Thioimide intermediate is C31. Residue D38 is the Proton donor of the active site. Residues 53 to 55 (VEL) and 72 to 73 (YE) contribute to the substrate site.

Belongs to the GTP cyclohydrolase I family. QueF type 1 subfamily.

It localises to the cytoplasm. The catalysed reaction is 7-aminomethyl-7-carbaguanine + 2 NADP(+) = 7-cyano-7-deazaguanine + 2 NADPH + 3 H(+). The protein operates within tRNA modification; tRNA-queuosine biosynthesis. Catalyzes the NADPH-dependent reduction of 7-cyano-7-deazaguanine (preQ0) to 7-aminomethyl-7-deazaguanine (preQ1). The polypeptide is NADPH-dependent 7-cyano-7-deazaguanine reductase (Chlorobium phaeobacteroides (strain BS1)).